The sequence spans 449 residues: Phosphoglucosamine mutase (449 aa).

The Phosphoserine intermediate role is filled by Ser-100. Mg(2+) contacts are provided by Ser-100, Asp-241, Asp-243, and Asp-245. Ser-100 is modified (phosphoserine).

Belongs to the phosphohexose mutase family. Mg(2+) is required as a cofactor. In terms of processing, activated by phosphorylation.

It catalyses the reaction alpha-D-glucosamine 1-phosphate = D-glucosamine 6-phosphate. Its function is as follows. Catalyzes the conversion of glucosamine-6-phosphate to glucosamine-1-phosphate. The polypeptide is Phosphoglucosamine mutase (Caldicellulosiruptor saccharolyticus (strain ATCC 43494 / DSM 8903 / Tp8T 6331)).